Here is a 320-residue protein sequence, read N- to C-terminus: Cytochrome c biogenesis protein CcsA (320 aa).

The next 7 membrane-spanning stretches (helical) occupy residues 14–34 (VLLLGLAAFALLLTALPWCFW), 68–88 (GHFPISNLYESLCFLAWACTL), 101–121 (LVAASATPMGLGCIAFASFAL), 146–166 (VIMVSYAALLVGSLLSVAVLM), 226–246 (TITVGFLLLTVGIISGAVWAN), 260–277 (TWALICWLVYAAYLHTRL), and 289–309 (VASLGLVVIVVCYIGVNLLGI).

It belongs to the CcmF/CycK/Ccl1/NrfE/CcsA family. As to quaternary structure, may interact with ccs1.

The protein resides in the cellular thylakoid membrane. Functionally, required during biogenesis of c-type cytochromes (cytochrome c6 and cytochrome f) at the step of heme attachment. The sequence is that of Cytochrome c biogenesis protein CcsA from Synechococcus sp. (strain WH7803).